Here is a 493-residue protein sequence, read N- to C-terminus: Glutamyl-tRNA(Gln) amidotransferase subunit A (493 aa).

Catalysis depends on charge relay system residues Lys-78 and Ser-158. Residue Ser-182 is the Acyl-ester intermediate of the active site.

Belongs to the amidase family. GatA subfamily. In terms of assembly, heterotrimer of A, B and C subunits.

The enzyme catalyses L-glutamyl-tRNA(Gln) + L-glutamine + ATP + H2O = L-glutaminyl-tRNA(Gln) + L-glutamate + ADP + phosphate + H(+). Allows the formation of correctly charged Gln-tRNA(Gln) through the transamidation of misacylated Glu-tRNA(Gln) in organisms which lack glutaminyl-tRNA synthetase. The reaction takes place in the presence of glutamine and ATP through an activated gamma-phospho-Glu-tRNA(Gln). The protein is Glutamyl-tRNA(Gln) amidotransferase subunit A of Methylocella silvestris (strain DSM 15510 / CIP 108128 / LMG 27833 / NCIMB 13906 / BL2).